The following is a 161-amino-acid chain: Putative pre-16S rRNA nuclease (161 aa).

Residues 142-161 (AGSPPGALVPRNRVDPDRHA) are disordered.

It belongs to the YqgF nuclease family.

Its subcellular location is the cytoplasm. Functionally, could be a nuclease involved in processing of the 5'-end of pre-16S rRNA. The sequence is that of Putative pre-16S rRNA nuclease from Clavibacter sepedonicus (Clavibacter michiganensis subsp. sepedonicus).